Consider the following 1387-residue polypeptide: Mediator of RNA polymerase II transcription subunit 13 (1387 aa).

Disordered stretches follow at residues 81–102 (ELNN…PEFS), 354–400 (HSAN…ESYS), and 620–676 (SVNS…DIPM). Polar residues-rich tracts occupy residues 354 to 367 (HSAN…STGE) and 390 to 400 (SRQNFPTESYS).

This sequence belongs to the Mediator complex subunit 13 family. As to quaternary structure, component of the SRB8-11 complex, which itself associates with the Mediator complex.

It is found in the nucleus. Component of the SRB8-11 complex. The SRB8-11 complex is a regulatory module of the Mediator complex which is itself involved in regulation of basal and activated RNA polymerase II-dependent transcription. The SRB8-11 complex may be involved in the transcriptional repression of a subset of genes regulated by Mediator. It may inhibit the association of the Mediator complex with RNA polymerase II to form the holoenzyme complex. The sequence is that of Mediator of RNA polymerase II transcription subunit 13 (SSN2) from Kluyveromyces lactis (strain ATCC 8585 / CBS 2359 / DSM 70799 / NBRC 1267 / NRRL Y-1140 / WM37) (Yeast).